We begin with the raw amino-acid sequence, 82 residues long: Auxin-induced protein 15A (82 aa).

It belongs to the ARG7 family.

The sequence is that of Auxin-induced protein 15A from Glycine max (Soybean).